We begin with the raw amino-acid sequence, 384 residues long: tRNA(Met) cytidine acetate ligase (384 aa).

ATP-binding positions include 7–20 (VAEY…HEFL), Gly101, Asn153, and Arg178.

This sequence belongs to the TmcAL family.

It is found in the cytoplasm. It catalyses the reaction cytidine(34) in elongator tRNA(Met) + acetate + ATP = N(4)-acetylcytidine(34) in elongator tRNA(Met) + AMP + diphosphate. Its function is as follows. Catalyzes the formation of N(4)-acetylcytidine (ac(4)C) at the wobble position of elongator tRNA(Met), using acetate and ATP as substrates. First activates an acetate ion to form acetyladenylate (Ac-AMP) and then transfers the acetyl group to tRNA to form ac(4)C34. The protein is tRNA(Met) cytidine acetate ligase of Lactobacillus delbrueckii subsp. bulgaricus (strain ATCC BAA-365 / Lb-18).